The primary structure comprises 339 residues: Thymidine kinase (339 aa).

11–18 (GAFGIGKT) serves as a coordination point for ATP. Glu-39 serves as the catalytic Proton acceptor. Tyr-59 and Gln-83 together coordinate substrate. Residue Arg-176 participates in ATP binding. Arg-182 provides a ligand contact to substrate.

Belongs to the herpesviridae thymidine kinase family. In terms of assembly, homodimer.

It carries out the reaction thymidine + ATP = dTMP + ADP + H(+). In terms of biological role, catalyzes the transfer of the gamma-phospho group of ATP to thymidine to generate dTMP in the salvage pathway of pyrimidine synthesis. The dTMP serves as a substrate for DNA polymerase during viral DNA replication. Allows the virus to be reactivated and to grow in non-proliferative cells lacking a high concentration of phosphorylated nucleic acid precursors. This Amazona oratrix (yellow-headed parrot) protein is Thymidine kinase.